Consider the following 396-residue polypeptide: 1-deoxy-D-xylulose 5-phosphate reductoisomerase (396 aa).

NADPH contacts are provided by Thr14, Gly15, Ser16, Ile17, Gly40, and Asn128. Lys129 provides a ligand contact to 1-deoxy-D-xylulose 5-phosphate. Glu130 contacts NADPH. Position 154 (Asp154) interacts with Mn(2+). Residues Ser155, Glu156, Ser180, and His203 each coordinate 1-deoxy-D-xylulose 5-phosphate. Position 156 (Glu156) interacts with Mn(2+). Residue Gly209 participates in NADPH binding. 4 residues coordinate 1-deoxy-D-xylulose 5-phosphate: Ser216, Asn221, Lys222, and Glu225. Glu225 lines the Mn(2+) pocket.

Belongs to the DXR family. Mg(2+) is required as a cofactor. Mn(2+) serves as cofactor.

The catalysed reaction is 2-C-methyl-D-erythritol 4-phosphate + NADP(+) = 1-deoxy-D-xylulose 5-phosphate + NADPH + H(+). The protein operates within isoprenoid biosynthesis; isopentenyl diphosphate biosynthesis via DXP pathway; isopentenyl diphosphate from 1-deoxy-D-xylulose 5-phosphate: step 1/6. Catalyzes the NADPH-dependent rearrangement and reduction of 1-deoxy-D-xylulose-5-phosphate (DXP) to 2-C-methyl-D-erythritol 4-phosphate (MEP). This is 1-deoxy-D-xylulose 5-phosphate reductoisomerase from Xylella fastidiosa (strain 9a5c).